We begin with the raw amino-acid sequence, 4328 residues long: Cadherin-4 (4328 aa).

Residues 1 to 23 (MKKHRVFHLFLLIFCKAISLVTT) form the signal peptide. At 24-4072 (SSSTEQIFEF…TVLEFLLKAE (4049 aa)) the chain is on the extracellular side. Residues Asn-39 and Asn-56 are each glycosylated (N-linked (GlcNAc...) asparagine). 2 Cadherin domains span residues 108–153 (PLNR…SPVF) and 156–275 (GEQG…NPNI). N-linked (GlcNAc...) asparagine glycosylation is found at Asn-196, Asn-330, Asn-339, Asn-365, Asn-431, Asn-452, and Asn-584. 11 Cadherin domains span residues 384–492 (DNEK…APVF), 507–608 (PGDV…SPVF), 609–720 (SSFP…SPQF), 721–826 (DEVS…PPKC), 827–934 (VVQH…AIEF), 935–1051 (DDVA…KPMY), 1047–1156 (KKPM…SPTF), 1175–1262 (RIFA…PPEI), 1265–1363 (KKSD…RPKF), 1364–1467 (SASH…SPYF), and 1476–1570 (VDES…APET). Asn-811 and Asn-899 each carry an N-linked (GlcNAc...) asparagine glycan. The short motif at 1090–1092 (RGD) is the Cell attachment site element. N-linked (GlcNAc...) asparagine glycosylation occurs at Asn-1192. Residues 1246–1267 (NSAGQKPRKSKNSPPEISGKKS) are disordered. A glycan (N-linked (GlcNAc...) asparagine) is linked at Asn-1335. Asn-1610 carries N-linked (GlcNAc...) asparagine glycosylation. A Cadherin 14 domain is found at 1671–1784 (RRQVYRGTIR…IDENDEPPRF (114 aa)). Residue Asn-1895 is glycosylated (N-linked (GlcNAc...) asparagine). The Cadherin 15 domain occupies 1917-1984 (FSIVNPHEAF…ENINDETPIF (68 aa)). N-linked (GlcNAc...) asparagine glycans are attached at residues Asn-2059, Asn-2150, Asn-2216, Asn-2367, Asn-2413, Asn-2440, and Asn-2535. Cadherin domains are found at residues 2187–2285 (EKLK…MPEF) and 2286–2397 (IRSD…PPRF). 9 Cadherin domains span residues 2429 to 2505 (LQFS…PPFF), 2506 to 2608 (VLPF…VPRF), 2609 to 2712 (SNSH…APAF), 2719 to 2813 (FTIS…PPQF), 2828 to 2915 (SPIL…CPEA), 2913 to 3011 (PEAN…RPKI), 3012 to 3113 (IEKL…APTF), 3114 to 3216 (EKST…APKF), and 3217 to 3326 (EKEK…APTF). Asn-2844, Asn-2916, Asn-2941, Asn-3083, and Asn-3143 each carry an N-linked (GlcNAc...) asparagine glycan. Residue Asn-3330 is glycosylated (N-linked (GlcNAc...) asparagine). Cadherin domains lie at 3335–3428 (VQEG…APTM) and 3429–3554 (KPMK…VDEF). A glycan (N-linked (GlcNAc...) asparagine) is linked at Asn-3512. One can recognise an EGF-like 1 domain in the interval 3706–3744 (ETNQCAKSPCEQWQLCIPSVHNSTYECVCPLGMEGDKCS). 10 disulfide bridges follow: Cys-3710/Cys-3721, Cys-3715/Cys-3732, Cys-3734/Cys-3743, Cys-3898/Cys-3925, Cys-3933/Cys-3944, Cys-3938/Cys-3954, Cys-3956/Cys-3965, Cys-3972/Cys-3983, Cys-3977/Cys-3992, and Cys-3994/Cys-4003. N-linked (GlcNAc...) asparagine glycosylation is present at Asn-3727. The region spanning 3757–3925 (EAELSVGGDG…MKLFGAQPGC (169 aa)) is the Laminin G-like domain. EGF-like domains lie at 3929–3966 (TSSP…NVCE) and 3968–4004 (DLEP…KHCE). The N-linked (GlcNAc...) asparagine glycan is linked to Asn-4043. Residues 4073-4093 (IVIVILGVLLLLLVFCLTFIT) traverse the membrane as a helical segment. At 4094–4328 (WKCCKKNRDP…IDEEVNIHIS (235 aa)) the chain is on the cytoplasmic side. Disordered regions lie at residues 4143 to 4215 (TSSV…SSLR) and 4268 to 4311 (NFER…PISL). Positions 4178–4196 (TRRDPLPSDKFRRVDETAN) are enriched in basic and acidic residues. Residues 4207–4209 (RGD) carry the Cell attachment site motif.

In terms of tissue distribution, in larvae and adult, it is expressed in various tissues including pharyngeal muscle, hypodermis and gonad. In the nervous system it is expressed in sensory neurons and motor neurons in the ventral cord.

The protein localises to the cell membrane. In terms of biological role, potential calcium-dependent cell-adhesion protein that controls axon guidance in the ventral cord. The protein is Cadherin-4 of Caenorhabditis elegans.